The chain runs to 511 residues: GMP synthase [glutamine-hydrolyzing] (511 aa).

Residues 5 to 195 (IVIVLDFGGQ…LFNICGCKGD (191 aa)) enclose the Glutamine amidotransferase type-1 domain. Cys82 acts as the Nucleophile in catalysis. Residues His169 and Glu171 contribute to the active site. The GMPS ATP-PPase domain maps to 196–386 (WKTSSFIEER…LGIPEKIVKR (191 aa)). 223–229 (SGGVDSS) contacts ATP.

In terms of assembly, homodimer.

The enzyme catalyses XMP + L-glutamine + ATP + H2O = GMP + L-glutamate + AMP + diphosphate + 2 H(+). It functions in the pathway purine metabolism; GMP biosynthesis; GMP from XMP (L-Gln route): step 1/1. In terms of biological role, catalyzes the synthesis of GMP from XMP. In Caldicellulosiruptor saccharolyticus (strain ATCC 43494 / DSM 8903 / Tp8T 6331), this protein is GMP synthase [glutamine-hydrolyzing].